A 382-amino-acid polypeptide reads, in one-letter code: Ribosomal RNA large subunit methyltransferase F (382 aa).

2 disordered regions span residues 1 to 53 (MTKP…LHRD) and 269 to 288 (NRAS…KSQL). Basic residues predominate over residues 8–24 (ASRKPVTKSGRNSKRSR). A compositionally biased stretch (basic and acidic residues) spans 269-286 (NRASKGHKLEPKAPKDKS).

This sequence belongs to the methyltransferase superfamily. METTL16/RlmF family.

It is found in the cytoplasm. It carries out the reaction adenosine(1618) in 23S rRNA + S-adenosyl-L-methionine = N(6)-methyladenosine(1618) in 23S rRNA + S-adenosyl-L-homocysteine + H(+). Specifically methylates the adenine in position 1618 of 23S rRNA. This is Ribosomal RNA large subunit methyltransferase F from Shewanella woodyi (strain ATCC 51908 / MS32).